A 147-amino-acid polypeptide reads, in one-letter code: Ribosomal RNA large subunit methyltransferase H (147 aa).

Residues Leu-64, Gly-96, and 115–120 each bind S-adenosyl-L-methionine; that span reads FSKMTF.

The protein belongs to the RNA methyltransferase RlmH family. Homodimer.

The protein localises to the cytoplasm. It carries out the reaction pseudouridine(1915) in 23S rRNA + S-adenosyl-L-methionine = N(3)-methylpseudouridine(1915) in 23S rRNA + S-adenosyl-L-homocysteine + H(+). Functionally, specifically methylates the pseudouridine at position 1915 (m3Psi1915) in 23S rRNA. The polypeptide is Ribosomal RNA large subunit methyltransferase H (Acholeplasma laidlawii (strain PG-8A)).